Reading from the N-terminus, the 324-residue chain is Galactosylgalactosylxylosylprotein 3-beta-glucuronosyltransferase 2 (324 aa).

The Cytoplasmic segment spans residues 1 to 2 (MK). Residues 3–23 (SALCSRFFILLPWILIVIIML) form a helical; Signal-anchor for type II membrane protein membrane-spanning segment. The Lumenal segment spans residues 24-324 (DVDPRRPAPQ…YHLDTVNIEV (301 aa)). Residues 50–78 (SRVPLRRSSPGRDAAEKRNESRPQLQPEP) are disordered. Asparagine 68 carries N-linked (GlcNAc...) asparagine glycosylation. UDP-alpha-D-glucuronate-binding positions include 88–90 (PTY), aspartate 119, arginine 156, arginine 161, and 186–188 (DDD). Aspartate 188 contributes to the Mn(2+) binding site. The interaction with galactose moiety of substrate glycoprotein stretch occupies residues 235–244 (WREDRPFAID). Glutamate 274 functions as the Proton donor/acceptor in the catalytic mechanism. Asparagine 293 is a glycosylation site (N-linked (GlcNAc...) asparagine). 301 to 303 (HTR) contributes to the UDP-alpha-D-glucuronate binding site.

Belongs to the glycosyltransferase 43 family. Homodimer. The cofactor is Mn(2+). In terms of tissue distribution, expressed in brain, but not in liver and kidney.

The protein localises to the golgi apparatus membrane. It catalyses the reaction 3-O-(beta-D-galactosyl-(1-&gt;3)-beta-D-galactosyl-(1-&gt;4)-beta-D-xylosyl)-L-seryl-[protein] + UDP-alpha-D-glucuronate = 3-O-(beta-D-GlcA-(1-&gt;3)-beta-D-Gal-(1-&gt;3)-beta-D-Gal-(1-&gt;4)-beta-D-Xyl)-L-seryl-[protein] + UDP + H(+). The protein operates within protein modification; protein glycosylation. Functionally, involved in the biosynthesis of L2/HNK-1 carbohydrate epitope on both glycolipids and glycoproteins. The polypeptide is Galactosylgalactosylxylosylprotein 3-beta-glucuronosyltransferase 2 (B3gat2) (Mus musculus (Mouse)).